The sequence spans 141 residues: Large ribosomal subunit protein uL14 (141 aa).

Belongs to the universal ribosomal protein uL14 family. Part of the 50S ribosomal subunit. Forms a cluster with proteins L3 and L24e, part of which may contact the 16S rRNA in 2 intersubunit bridges.

Functionally, binds to 23S rRNA. Forms part of two intersubunit bridges in the 70S ribosome. The sequence is that of Large ribosomal subunit protein uL14 from Pyrococcus furiosus (strain ATCC 43587 / DSM 3638 / JCM 8422 / Vc1).